Here is a 112-residue protein sequence, read N- to C-terminus: Integration host factor subunit alpha (112 aa).

The protein belongs to the bacterial histone-like protein family. As to quaternary structure, heterodimer of an alpha and a beta chain.

This protein is one of the two subunits of integration host factor, a specific DNA-binding protein that functions in genetic recombination as well as in transcriptional and translational control. The protein is Integration host factor subunit alpha of Rhizobium johnstonii (strain DSM 114642 / LMG 32736 / 3841) (Rhizobium leguminosarum bv. viciae).